The sequence spans 168 residues: Peptidyl-Lys metalloendopeptidase (168 aa).

2 cysteine pairs are disulfide-bonded: C6-C76 and C78-C98. H118 contacts Zn(2+). Residue E119 is part of the active site. Positions 122 and 131 each coordinate Zn(2+).

Requires Zn(2+) as cofactor.

It is found in the secreted. The enzyme catalyses Preferential cleavage in proteins: -Xaa-|-Lys- (in which Xaa may be Pro).. Inhibited by chelating agents such as EDTA and 1,10-phenanthroline. The protein is Peptidyl-Lys metalloendopeptidase (MEP) of Pleurotus ostreatus (Oyster mushroom).